Reading from the N-terminus, the 159-residue chain is Cyclic pyranopterin monophosphate synthase (159 aa).

Substrate-binding positions include 75-77 and 113-114; these read LCH and ME. The active site involves D128.

It belongs to the MoaC family. As to quaternary structure, homohexamer; trimer of dimers.

It carries out the reaction (8S)-3',8-cyclo-7,8-dihydroguanosine 5'-triphosphate = cyclic pyranopterin phosphate + diphosphate. It functions in the pathway cofactor biosynthesis; molybdopterin biosynthesis. Catalyzes the conversion of (8S)-3',8-cyclo-7,8-dihydroguanosine 5'-triphosphate to cyclic pyranopterin monophosphate (cPMP). The polypeptide is Cyclic pyranopterin monophosphate synthase (Yersinia pseudotuberculosis serotype O:3 (strain YPIII)).